Reading from the N-terminus, the 201-residue chain is Small ribosomal subunit protein uS2 (201 aa).

The protein belongs to the universal ribosomal protein uS2 family. As to quaternary structure, part of the 50S ribosomal subunit.

The chain is Small ribosomal subunit protein uS2 from Thermococcus kodakarensis (strain ATCC BAA-918 / JCM 12380 / KOD1) (Pyrococcus kodakaraensis (strain KOD1)).